We begin with the raw amino-acid sequence, 240 residues long: Homeobox protein notochord (240 aa).

The span at 1–13 (MSSPAPSGTQVQP) shows a compositional bias: polar residues. Disordered stretches follow at residues 1–21 (MSSP…PCPG) and 208–240 (QKLK…GIGS). The homeobox DNA-binding region spans 149 to 208 (TKRVRTTFNLQQLQELEKVFAKQHNLVGKERAQLAARLHLTENQVRIWFQNRRVKYQKQQ). Positions 213 to 225 (PSSSVMEEPSSSS) are enriched in low complexity.

It is found in the nucleus. Its function is as follows. Transcription factor that controls node morphogenesis. Acts downstream of both FOXA2 and Brachyury (T) during notochord development. Is essential for cilia formation in the posterior notochord (PNC) and for left-right patterning; acts upstream of FOXJ1 and RFX3 in this process and is required for the expression of various components important for axonemal assembly and function. Plays a role in regulating axial versus paraxial cell fate. Activates the transcription of ciliary proteins C11orf97 homolog, FAM183B and SPACA9 in the embryonic ventral node. The chain is Homeobox protein notochord (Noto) from Mus musculus (Mouse).